The primary structure comprises 184 residues: Photosystem I assembly protein Ycf4 (184 aa).

A run of 2 helical transmembrane segments spans residues 19–39 (ISNLCWAFTLFLGSLGFVLVG) and 57–77 (IIFFPQGIVMSFYGIAGLFIS).

This sequence belongs to the Ycf4 family.

It localises to the plastid thylakoid membrane. Its function is as follows. Seems to be required for the assembly of the photosystem I complex. The protein is Photosystem I assembly protein Ycf4 of Cuscuta reflexa (Southern Asian dodder).